A 216-amino-acid chain; its full sequence is Thiopurine S-methyltransferase (216 aa).

S-adenosyl-L-methionine contacts are provided by Trp10, Leu45, Glu66, and Arg123.

It belongs to the class I-like SAM-binding methyltransferase superfamily. TPMT family.

The protein localises to the cytoplasm. The catalysed reaction is S-adenosyl-L-methionine + a thiopurine = S-adenosyl-L-homocysteine + a thiopurine S-methylether.. The protein is Thiopurine S-methyltransferase of Pseudomonas putida (strain GB-1).